We begin with the raw amino-acid sequence, 818 residues long: Patatin-like phospholipase domain-containing protein YALI0D16379g (818 aa).

Disordered regions lie at residues 1 to 50 (MLKL…RDVN) and 154 to 178 (EEKRRRGKSKKDKEGSEGDKTKTKE). A compositionally biased stretch (polar residues) spans 22-38 (SQQLTLDSPEGSETSSR). The segment covering 164-178 (KDKEGSEGDKTKTKE) has biased composition (basic and acidic residues). The helical transmembrane segment at 223–243 (WPALFFIGMWLLFLTTIYASV) threads the bilayer. In terms of domain architecture, PNPLA spans 398 to 589 (LCLSGGGCFA…RTDIPVDALN (192 aa)). A GXSXG motif is present at residues 429–433 (GTSGG). The Nucleophile role is filled by S431. The active-site Proton acceptor is D576. The interval 781–805 (AGTDISSSNSDYDHEPQWEMDEGDS) is disordered.

Belongs to the PLPL family.

It is found in the membrane. Functionally, probable lipid hydrolase. The sequence is that of Patatin-like phospholipase domain-containing protein YALI0D16379g from Yarrowia lipolytica (strain CLIB 122 / E 150) (Yeast).